Consider the following 187-residue polypeptide: Protein ECM23 (187 aa).

Disordered stretches follow at residues 106–127 and 167–187; these read GKKS…LPNG and KKIR…FKNK. A GATA-type zinc finger spans residues 126 to 180; that stretch reads NGQPKECATCGDTWTSQWRSGPNGNVELCSRCGIAYRKKMEKKIRSQQSSDDGTK.

Its function is as follows. Involved in morphogenesis. May be involved in cell wall organization and biogenesis. The sequence is that of Protein ECM23 (ECM23) from Saccharomyces cerevisiae (strain ATCC 204508 / S288c) (Baker's yeast).